The chain runs to 187 residues: Threonylcarbamoyl-AMP synthase (187 aa).

The 184-residue stretch at 4–187 (TLDLDRAVAT…DARSGQILRD (184 aa)) folds into the YrdC-like domain.

Belongs to the SUA5 family. TsaC subfamily.

Its subcellular location is the cytoplasm. The enzyme catalyses L-threonine + hydrogencarbonate + ATP = L-threonylcarbamoyladenylate + diphosphate + H2O. Its function is as follows. Required for the formation of a threonylcarbamoyl group on adenosine at position 37 (t(6)A37) in tRNAs that read codons beginning with adenine. Catalyzes the conversion of L-threonine, HCO(3)(-)/CO(2) and ATP to give threonylcarbamoyl-AMP (TC-AMP) as the acyladenylate intermediate, with the release of diphosphate. The polypeptide is Threonylcarbamoyl-AMP synthase (Xanthomonas euvesicatoria pv. vesicatoria (strain 85-10) (Xanthomonas campestris pv. vesicatoria)).